A 672-amino-acid chain; its full sequence is Synaptotagmin-like protein 4 (672 aa).

The region spanning 4–122 is the RabBD domain; that stretch reads ILDLSFLSEM…KATGDWFYDQ (119 aa). The FYVE-type zinc-finger motif lies at 63–105; that stretch reads CARCQEGLGRLISKSNTCVGCNHLVCRECRVLESNGSWRCKVC. Residues 199–222 are disordered; it reads SESLDSYTADSDSTSRRDSLDKSG. Phosphoserine is present on residues Ser201, Ser204, Ser217, Ser221, and Ser274. Residues 357–479 form the C2 1 domain; that stretch reads VTGKIAFSLK…KLDKKLDHCL (123 aa). Ser489 is modified (phosphoserine). Residues 508–634 enclose the C2 2 domain; the sequence is PASKLPVGGD…ISSGEVVDWM (127 aa).

Part of a ternary complex containing STX1A and RAB27A. Can bind both dominant negative and dominant active mutants of RAB27A. Binds STXBP1, RAB3A, RAB8A and RAB27B. Interacts with MYO5A. As to expression, detected in insulin-secreting cell lines.

It localises to the membrane. It is found in the cytoplasmic vesicle. The protein resides in the secretory vesicle membrane. Modulates exocytosis of dense-core granules and secretion of hormones in the pancreas and the pituitary. Interacts with vesicles containing negatively charged phospholipids in a Ca(2+)-independent manner. This chain is Synaptotagmin-like protein 4 (Sytl4), found in Rattus norvegicus (Rat).